The sequence spans 208 residues: U11/U12 small nuclear ribonucleoprotein 35 kDa protein (208 aa).

The 79-residue stretch at 50-128 (LTLFVARLNP…YELLVDVEQE (79 aa)) folds into the RRM domain. The disordered stretch occupies residues 133-208 (GWRPRRLGGG…TEDRTHRHTY (76 aa)). The segment covering 171–208 (RPAEPRGRETERERDRRDYRDRRHERTHTEDRTHRHTY) has biased composition (basic and acidic residues).

Its subcellular location is the nucleus. This Danio rerio (Zebrafish) protein is U11/U12 small nuclear ribonucleoprotein 35 kDa protein (snrnp35).